The following is a 301-amino-acid chain: uncharacterized protein (301 aa).

Catalysis depends on charge relay system residues S44 and Y107. Y133 (proton donor) is an active-site residue. Catalysis depends on K162, which acts as the Schiff-base intermediate with substrate.

It belongs to the DapA family. As to quaternary structure, homotetramer.

Its subcellular location is the cytoplasm. This is an uncharacterized protein from Pyrobaculum aerophilum (strain ATCC 51768 / DSM 7523 / JCM 9630 / CIP 104966 / NBRC 100827 / IM2).